Consider the following 378-residue polypeptide: MDSRRKVRSENLYKTYWLYWRLLGVEGDYPFRRLVDFTITSFITILFPVHLILGMYKKPQIQVFRSLHFTSECLFCSYKFFCFRWKLKEIKTIEGLLQDLDSRVESEEERNYFNQNPSRVARMLSKSYLVAAISAIITATVAGLFSTGRNLMYLGWFPYDFQATAAIYWISFSYQAIGSSLLILENLANDSYPPITFCVVSGHVRLLIMRLSRIGHDVKLSSSENTRKLIEGIQDHRKLMKIIRLLRSTLHLSQLGQFLSSGINISITLINILFFAENNFAMLYYAVFFAAMLIELFPSCYYGILMTMEFDKLPYAIFSSNWLKMDKRYNRSLIILMQLTLVPVNIKAGGIVGIDMSAFFATVRMAYSFYTLALSFRV.

The Cytoplasmic segment spans residues 1-33 (MDSRRKVRSENLYKTYWLYWRLLGVEGDYPFRR). Residues 34 to 54 (LVDFTITSFITILFPVHLILG) traverse the membrane as a helical segment. At 55–62 (MYKKPQIQ) the chain is on the extracellular side. Residues 63–83 (VFRSLHFTSECLFCSYKFFCF) traverse the membrane as a helical segment. At 84–127 (RWKLKEIKTIEGLLQDLDSRVESEEERNYFNQNPSRVARMLSKS) the chain is on the cytoplasmic side. Residues 128 to 148 (YLVAAISAIITATVAGLFSTG) form a helical membrane-spanning segment. The Extracellular segment spans residues 149-163 (RNLMYLGWFPYDFQA). A helical membrane pass occupies residues 164–184 (TAAIYWISFSYQAIGSSLLIL). Topologically, residues 185–254 (ENLANDSYPP…LLRSTLHLSQ (70 aa)) are cytoplasmic. Residues 255–275 (LGQFLSSGINISITLINILFF) form a helical membrane-spanning segment. Topologically, residues 276–285 (AENNFAMLYY) are extracellular. Residues 286–306 (AVFFAAMLIELFPSCYYGILM) traverse the membrane as a helical segment. The Cytoplasmic portion of the chain corresponds to 307–355 (TMEFDKLPYAIFSSNWLKMDKRYNRSLIILMQLTLVPVNIKAGGIVGID). Residues 356–376 (MSAFFATVRMAYSFYTLALSF) traverse the membrane as a helical segment. Residues 377–378 (RV) lie on the Extracellular side of the membrane.

This sequence belongs to the insect chemoreceptor superfamily. Heteromeric odorant receptor channel (TC 1.A.69) family. Or2a subfamily. As to quaternary structure, interacts with Orco. Complexes exist early in the endomembrane system in olfactory sensory neurons (OSNs), coupling these complexes to the conserved ciliary trafficking pathway. Expressed in 1-2 cells on the distal edge of the antenna but not the maxillary palp.

The protein resides in the cell membrane. In terms of biological role, odorant receptor which mediates acceptance or avoidance behavior, depending on its substrates. The odorant receptor repertoire encodes a large collection of odor stimuli that vary widely in identity, intensity, and duration. May form a complex with Orco to form odorant-sensing units, providing sensitive and prolonged odorant signaling and calcium permeability. This Drosophila melanogaster (Fruit fly) protein is Odorant receptor 33a (Or33a).